A 62-amino-acid chain; its full sequence is Large ribosomal subunit protein bL28 (62 aa).

The protein belongs to the bacterial ribosomal protein bL28 family.

The sequence is that of Large ribosomal subunit protein bL28 from Thermoanaerobacter sp. (strain X514).